Reading from the N-terminus, the 214-residue chain is Octanoyltransferase (214 aa).

In terms of domain architecture, BPL/LPL catalytic spans 32-207 (EDTLDEIWLV…NLLALLNHPP (176 aa)). Residues 71–78 (RGGQVTYH), 138–140 (SLG), and 151–153 (GLA) each bind substrate. The active-site Acyl-thioester intermediate is Cys169.

This sequence belongs to the LipB family.

It is found in the cytoplasm. The catalysed reaction is octanoyl-[ACP] + L-lysyl-[protein] = N(6)-octanoyl-L-lysyl-[protein] + holo-[ACP] + H(+). The protein operates within protein modification; protein lipoylation via endogenous pathway; protein N(6)-(lipoyl)lysine from octanoyl-[acyl-carrier-protein]: step 1/2. Functionally, catalyzes the transfer of endogenously produced octanoic acid from octanoyl-acyl-carrier-protein onto the lipoyl domains of lipoate-dependent enzymes. Lipoyl-ACP can also act as a substrate although octanoyl-ACP is likely to be the physiological substrate. This Klebsiella pneumoniae (strain 342) protein is Octanoyltransferase.